Reading from the N-terminus, the 109-residue chain is Staphostatin B (109 aa).

Residues 97-101 form a binds to staphopain B region; that stretch reads IGTSR.

This sequence belongs to the protease inhibitor I57 (SspC) family. Forms a stable non-covalent complex with prematurely activated/folded SspB.

Its subcellular location is the cytoplasm. Functionally, specifically inhibits the cysteine protease staphopain B (SspB) by blocking the active site of the enzyme. Probably required to protect cytoplasmic proteins from being degraded by prematurely activated/folded prostaphopain B. Also involved in growth capacity, viability and bacterial morphology. This chain is Staphostatin B (sspC), found in Staphylococcus aureus (strain Mu50 / ATCC 700699).